The following is a 102-amino-acid chain: uncharacterized protein (102 aa).

Helical transmembrane passes span 24–44 (AFIV…PVLT) and 55–75 (IGAV…TWIL).

Its subcellular location is the cell membrane. This is an uncharacterized protein from Bacillus subtilis (strain 168).